A 415-amino-acid chain; its full sequence is Acetyl-CoA acetyltransferase 1 (415 aa).

C99 functions as the Acyl-thioester intermediate in the catalytic mechanism. Residue K239 participates in CoA binding. A256 lines the K(+) pocket. Residue S260 participates in CoA binding. Residue V357 participates in K(+) binding. Catalysis depends on proton acceptor residues H361 and C391.

This sequence belongs to the thiolase-like superfamily. Thiolase family. As to expression, expressed in the vascular system of roots, cotyledons, young leaves, fully expanded leaves, stems, flowers, and funiculi of siliques.

It localises to the cytoplasm. The protein localises to the peroxisome. The enzyme catalyses 2 acetyl-CoA = acetoacetyl-CoA + CoA. It functions in the pathway metabolic intermediate biosynthesis; (R)-mevalonate biosynthesis; (R)-mevalonate from acetyl-CoA: step 1/3. Catalyzes the condensation of two molecules of acetyl-CoA to produce acetoacetyl-CoA. The sequence is that of Acetyl-CoA acetyltransferase 1 from Arabidopsis thaliana (Mouse-ear cress).